The primary structure comprises 585 residues: Aspartate--tRNA ligase (585 aa).

Glu-171 is an L-aspartate binding site. Positions 195–198 are aspartate; it reads QLFK. Arg-217 contributes to the L-aspartate binding site. ATP is bound by residues 217–219 and Gln-226; that span reads RDE. His-448 provides a ligand contact to L-aspartate. Glu-482 is a binding site for ATP. L-aspartate is bound at residue Arg-489. Residue 534–537 participates in ATP binding; sequence GLDR.

It belongs to the class-II aminoacyl-tRNA synthetase family. Type 1 subfamily. Homodimer.

Its subcellular location is the cytoplasm. It carries out the reaction tRNA(Asp) + L-aspartate + ATP = L-aspartyl-tRNA(Asp) + AMP + diphosphate. In terms of biological role, catalyzes the attachment of L-aspartate to tRNA(Asp) in a two-step reaction: L-aspartate is first activated by ATP to form Asp-AMP and then transferred to the acceptor end of tRNA(Asp). The chain is Aspartate--tRNA ligase from Histophilus somni (strain 129Pt) (Haemophilus somnus).